The primary structure comprises 374 residues: Chaperone protein DnaJ (374 aa).

Residues 5-70 (DYYEVLGVAR…NKRRMYDSHG (66 aa)) form the J domain. The segment at 130–207 (GVERRIEIPT…CHGNGRVEED (78 aa)) adopts a CR-type zinc-finger fold. Cys-143, Cys-146, Cys-159, Cys-162, Cys-181, Cys-184, Cys-195, and Cys-198 together coordinate Zn(2+). CXXCXGXG motif repeat units follow at residues 143-150 (CGDCDGSG), 159-166 (CNVCHGRG), 181-188 (CHNCGGRG), and 195-202 (CKTCHGNG).

It belongs to the DnaJ family. As to quaternary structure, homodimer. Requires Zn(2+) as cofactor.

Its subcellular location is the cytoplasm. Participates actively in the response to hyperosmotic and heat shock by preventing the aggregation of stress-denatured proteins and by disaggregating proteins, also in an autonomous, DnaK-independent fashion. Unfolded proteins bind initially to DnaJ; upon interaction with the DnaJ-bound protein, DnaK hydrolyzes its bound ATP, resulting in the formation of a stable complex. GrpE releases ADP from DnaK; ATP binding to DnaK triggers the release of the substrate protein, thus completing the reaction cycle. Several rounds of ATP-dependent interactions between DnaJ, DnaK and GrpE are required for fully efficient folding. Also involved, together with DnaK and GrpE, in the DNA replication of plasmids through activation of initiation proteins. The sequence is that of Chaperone protein DnaJ from Stenotrophomonas maltophilia (strain K279a).